A 156-amino-acid chain; its full sequence is Small ribosomal subunit protein uS7 (156 aa).

It belongs to the universal ribosomal protein uS7 family. Part of the 30S ribosomal subunit. Contacts proteins S9 and S11.

Functionally, one of the primary rRNA binding proteins, it binds directly to 16S rRNA where it nucleates assembly of the head domain of the 30S subunit. Is located at the subunit interface close to the decoding center, probably blocks exit of the E-site tRNA. The polypeptide is Small ribosomal subunit protein uS7 (Nostoc punctiforme (strain ATCC 29133 / PCC 73102)).